The primary structure comprises 361 residues: Chorismate synthase (361 aa).

2 residues coordinate NADP(+): Arg-48 and Arg-54. FMN contacts are provided by residues 125–127 (RSS), 238–239 (NA), Gly-278, 293–297 (KPTSS), and Arg-319.

It belongs to the chorismate synthase family. As to quaternary structure, homotetramer. FMNH2 serves as cofactor.

It carries out the reaction 5-O-(1-carboxyvinyl)-3-phosphoshikimate = chorismate + phosphate. Its pathway is metabolic intermediate biosynthesis; chorismate biosynthesis; chorismate from D-erythrose 4-phosphate and phosphoenolpyruvate: step 7/7. In terms of biological role, catalyzes the anti-1,4-elimination of the C-3 phosphate and the C-6 proR hydrogen from 5-enolpyruvylshikimate-3-phosphate (EPSP) to yield chorismate, which is the branch point compound that serves as the starting substrate for the three terminal pathways of aromatic amino acid biosynthesis. This reaction introduces a second double bond into the aromatic ring system. In Escherichia coli (strain SE11), this protein is Chorismate synthase.